We begin with the raw amino-acid sequence, 918 residues long: Probable UDP-N-acetylglucosamine--peptide N-acetylglucosaminyltransferase SPINDLY (918 aa).

11 TPR repeats span residues 34–66, 67–99, 101–132, 140–171, 172–205, 207–238, 239–271, 273–305, 306–339, 341–373, and 374–407; these read GKEA…SKNV, EAHI…DPHN, CALT…DPSY, ATVL…DPHY, APAC…SPTY, DAYC…NNMG, IALT…NWHY, DAMY…NPHC, AEAC…KPNF, QSLN…NPTY, and AEAY…DPDS. Positions 408-918 are catalytic region; the sequence is RNAGQNRLLA…LNCGDQCFRV (511 aa). Over residues 843–853 the composition is skewed to polar residues; that stretch reads QLHQQPNTSPQ. The segment at 843–877 is disordered; that stretch reads QLHQQPNTSPQKLVKDEPADDASGPEHGPASKDNP.

Belongs to the glycosyltransferase 41 family. O-GlcNAc transferase subfamily.

Its subcellular location is the nucleus. The enzyme catalyses L-seryl-[protein] + UDP-N-acetyl-alpha-D-glucosamine = 3-O-(N-acetyl-beta-D-glucosaminyl)-L-seryl-[protein] + UDP + H(+). It carries out the reaction L-threonyl-[protein] + UDP-N-acetyl-alpha-D-glucosamine = 3-O-(N-acetyl-beta-D-glucosaminyl)-L-threonyl-[protein] + UDP + H(+). It functions in the pathway protein modification; protein glycosylation. Its function is as follows. Probable O-linked N-acetylglucosamine transferase (OGT) involved in various processes such as gibberellin (GA) signaling pathway. OGTs catalyze the addition of nucleotide-activated sugars directly onto the polypeptide through O-glycosidic linkage with the hydroxyl of serine or threonine. Probably acts by adding O-linked sugars to yet unknown proteins. May function as a negative regulator of GA signal transduction during vernalization, inhibiting adventitious shoot elongation during vernalization. This Eustoma exaltatum subsp. russellianum (Bluebells) protein is Probable UDP-N-acetylglucosamine--peptide N-acetylglucosaminyltransferase SPINDLY (SPY).